The following is a 325-amino-acid chain: Metacaspase-9 (325 aa).

Catalysis depends on residues H95 and C147. S-nitrosocysteine is present on C147. Residue N177 is glycosylated (N-linked (GlcNAc...) asparagine).

This sequence belongs to the peptidase C14B family. In terms of processing, the two subunits are derived from the precursor sequence by an autocatalytic mechanism. Post-translationally, S-nitrosylation at Cys-147 suppresses both autoprocessing and proteolytic activity of the full-length protein, but does not affect the activity of the mature processed form. In terms of tissue distribution, expressed in root tips, cauline leaves, flowers and siliques.

The protein resides in the secreted. It is found in the extracellular space. The protein localises to the apoplast. Inhibited by serpin ZX and nitric oxide through cysteine nitrosylation. Functionally, cysteine protease that cleaves specifically after arginine or lysine residues. Does not cleave caspase-specific substrates. Required for proteolytic processing of GRI. This is Metacaspase-9 (AMC9) from Arabidopsis thaliana (Mouse-ear cress).